The chain runs to 473 residues: Ribulose bisphosphate carboxylase large chain (473 aa).

Substrate contacts are provided by N116 and T166. K168 acts as the Proton acceptor in catalysis. Residue K170 participates in substrate binding. Mg(2+) contacts are provided by K194, D196, and E197. K194 carries the post-translational modification N6-carboxylysine. Catalysis depends on H287, which acts as the Proton acceptor. The substrate site is built by R288, H320, and S372.

It belongs to the RuBisCO large chain family. Type I subfamily. Heterohexadecamer of 8 large chains and 8 small chains. It depends on Mg(2+) as a cofactor.

The enzyme catalyses 2 (2R)-3-phosphoglycerate + 2 H(+) = D-ribulose 1,5-bisphosphate + CO2 + H2O. The catalysed reaction is D-ribulose 1,5-bisphosphate + O2 = 2-phosphoglycolate + (2R)-3-phosphoglycerate + 2 H(+). In terms of biological role, ruBisCO catalyzes two reactions: the carboxylation of D-ribulose 1,5-bisphosphate, the primary event in carbon dioxide fixation, as well as the oxidative fragmentation of the pentose substrate. Both reactions occur simultaneously and in competition at the same active site. This Rhodobacter capsulatus (strain ATCC BAA-309 / NBRC 16581 / SB1003) protein is Ribulose bisphosphate carboxylase large chain.